The sequence spans 638 residues: MESTIVMMMMITRSFFCFLGFLCLLCSSVHGLLSPKGVNFEVQALMDIKASLHDPHGVLDNWDRDAVDPCSWTMVTCSSENFVIGLGTPSQNLSGTLSPSITNLTNLRIVLLQNNNIKGKIPAEIGRLTRLETLDLSDNFFHGEIPFSVGYLQSLQYLRLNNNSLSGVFPLSLSNMTQLAFLDLSYNNLSGPVPRFAAKTFSIVGNPLICPTGTEPDCNGTTLIPMSMNLNQTGVPLYAGGSRNHKMAIAVGSSVGTVSLIFIAVGLFLWWRQRHNQNTFFDVKDGNHHEEVSLGNLRRFGFRELQIATNNFSSKNLLGKGGYGNVYKGILGDSTVVAVKRLKDGGALGGEIQFQTEVEMISLAVHRNLLRLYGFCITQTEKLLVYPYMSNGSVASRMKAKPVLDWSIRKRIAIGAARGLVYLHEQCDPKIIHRDVKAANILLDDYCEAVVGDFGLAKLLDHQDSHVTTAVRGTVGHIAPEYLSTGQSSEKTDVFGFGILLLELVTGQRAFEFGKAANQKGVMLDWVKKIHQEKKLELLVDKELLKKKSYDEIELDEMVRVALLCTQYLPGHRPKMSEVVRMLEGDGLAEKWEASQRSDSVSKCSNRINELMSSSDRYSDLTDDSSLLVQAMELSGPR.

The first 31 residues, 1 to 31, serve as a signal peptide directing secretion; that stretch reads MESTIVMMMMITRSFFCFLGFLCLLCSSVHG. Residues 32–248 are Extracellular-facing; the sequence is LLSPKGVNFE…AGGSRNHKMA (217 aa). N-linked (GlcNAc...) asparagine glycans are attached at residues N92 and N103. LRR repeat units follow at residues 104–128, 130–152, 153–175, and 177–200; these read LTNL…IGRL, RLET…VGYL, QSLQ…SLSN, and TQLA…AAKT. 5 N-linked (GlcNAc...) asparagine glycosylation sites follow: N162, N175, N188, N219, and N231. Residues 249-269 form a helical membrane-spanning segment; the sequence is IAVGSSVGTVSLIFIAVGLFL. Over 270 to 638 the chain is Cytoplasmic; the sequence is WWRQRHNQNT…VQAMELSGPR (369 aa). At T309 the chain carries Phosphothreonine. The region spanning 312-593 is the Protein kinase domain; sequence FSSKNLLGKG…EGDGLAEKWE (282 aa). An ATP-binding site is contributed by 318-326; it reads LGKGGYGNV. Phosphothreonine is present on T335. K340 is a binding site for ATP. 2 positions are modified to phosphoserine: S393 and S396. The interval 422 to 502 is interaction with geminivirus NSP protein; the sequence is YLHEQCDPKI…DVFGFGILLL (81 aa). D435 acts as the Proton acceptor in catalysis. 3 positions are modified to phosphothreonine: T468, T469, and T474. Y482 carries the phosphotyrosine modification. A Phosphoserine modification is found at S484. T485 is subject to Phosphothreonine. Position 489 is a phosphoserine (S489). The residue at position 566 (T566) is a Phosphothreonine.

This sequence belongs to the protein kinase superfamily. Ser/Thr protein kinase family. In terms of assembly, oligomer. Interacts with geminivirus nuclear shuttle protein (NSP). Interacts with RPL10A and RPL18B. In terms of processing, autophosphorylated. As to expression, expressed in seedlings, leaves, roots, stems and flowers.

It localises to the cell membrane. It catalyses the reaction L-seryl-[protein] + ATP = O-phospho-L-seryl-[protein] + ADP + H(+). The enzyme catalyses L-threonyl-[protein] + ATP = O-phospho-L-threonyl-[protein] + ADP + H(+). Inhibited by the viral nuclear shuttle protein (NSP) that binds to the region required for oligomerization. Involved in defense response to geminivirus and begomovirus infection via regulation of the nuclear trafficking of RPL10A. Phosphorylates RPL10A in vitro. Activation of NIK1 down-regulates cytosolic translation. The protein is Protein NSP-INTERACTING KINASE 1 of Arabidopsis thaliana (Mouse-ear cress).